Consider the following 217-residue polypeptide: N-(5'-phosphoribosyl)anthranilate isomerase (217 aa).

It belongs to the TrpF family.

It carries out the reaction N-(5-phospho-beta-D-ribosyl)anthranilate = 1-(2-carboxyphenylamino)-1-deoxy-D-ribulose 5-phosphate. It functions in the pathway amino-acid biosynthesis; L-tryptophan biosynthesis; L-tryptophan from chorismate: step 3/5. This chain is N-(5'-phosphoribosyl)anthranilate isomerase, found in Bacillus velezensis (strain DSM 23117 / BGSC 10A6 / LMG 26770 / FZB42) (Bacillus amyloliquefaciens subsp. plantarum).